Reading from the N-terminus, the 757-residue chain is Dolichyl-diphosphooligosaccharide--protein glycosyltransferase subunit stt-3 (757 aa).

Residues 1–13 lie on the Cytoplasmic side of the membrane; it reads MTSTTAARTASSR. A helical membrane pass occupies residues 14 to 34; sequence VGATTLLTIVVLALAWFVGFA. Residues 35–121 are Lumenal-facing; that stretch reads SRLFAIVRFE…VHIREVCVFL (87 aa). Positions 49-51 match the DXD motif 1 motif; it reads EFD. Aspartate 51 contacts Mn(2+). Residues 122–140 traverse the membrane as a helical segment; sequence APTFSGLTAIATYLLTKEL. Over 141-142 the chain is Cytoplasmic; that stretch reads WS. A helical membrane pass occupies residues 143 to 160; it reads PGAGLFAACFIAISPGYT. The Lumenal segment spans residues 161-171; it reads SRSVAGSYDNE. Positions 169 and 171 each coordinate Mn(2+). The DXD motif 2 motif lies at 169–171; it reads DNE. A helical membrane pass occupies residues 172-191; sequence GIAIFALQFTYYLWVKSLKT. Topologically, residues 192 to 193 are cytoplasmic; it reads GS. A helical membrane pass occupies residues 194 to 208; it reads IMWASLCALSYFYMV. Over 209 to 210 the chain is Lumenal; the sequence is SA. Helical transmembrane passes span 211–235 and 236–261; these read WGGY…GRYS and SRLF…FVGF. The Lumenal portion of the chain corresponds to 262–269; it reads QPVRTSEH. The helical transmembrane segment at 270 to 289 threads the bilayer; it reads MPAFGVFGLLQIVALMHYAR. Residues 290–299 are Cytoplasmic-facing; that stretch reads NRITRQQFMT. Residues 300–320 traverse the membrane as a helical segment; the sequence is LFVGGLTILGALSVVVYFALV. Residues 321–358 are Lumenal-facing; sequence WGGYVAPFSGRFYSLWDTGYAKIHIPIIASVSEHQPTT. The SVSE motif motif lies at 350–353; sequence SVSE. A helical membrane pass occupies residues 359–381; the sequence is WVSFFFDLHITAAVFPVGLWYCI. Topologically, residues 382 to 387 are cytoplasmic; the sequence is KKVNDE. A helical transmembrane segment spans residues 388 to 404; sequence RVFIILYAVSAVYFAGV. Topologically, residues 405–408 are lumenal; the sequence is MVRL. Dolichyl diphosphooligosaccharide is bound at residue arginine 407. A helical membrane pass occupies residues 409–430; that stretch reads MLTLTPAVCVLAGIGFSYTFEK. Over 431–469 the chain is Cytoplasmic; the sequence is YLKDEETKERSSSQSGTTKDEKLYDKAAKNVKSRNANDG. Residues 470 to 495 traverse the membrane as a helical segment; that stretch reads DESGVSSNVRTIISIILVIFLLMFVV. Topologically, residues 496–757 are lumenal; it reads HATYVTSNAY…IRPAPTASKA (262 aa). Residues 547–549 are interacts with target acceptor peptide in protein substrate; the sequence is WWD. Residues 547 to 551 carry the WWDYG motif motif; the sequence is WWDYG. Dolichyl diphosphooligosaccharide is bound at residue tyrosine 552. N-linked (GlcNAc...) asparagine glycosylation is found at asparagine 559 and asparagine 566. Residue asparagine 570 is glycosylated (N-linked (GlcNAc...) (high mannose) asparagine). Asparagine 584 carries an N-linked (GlcNAc...) asparagine glycan. Positions 614-621 match the DK motif motif; it reads DINKFLWM. The interval 721–757 is disordered; it reads RPTVKSEEATIPIKGKKATQGKNKKGVIRPAPTASKA. Residues 734–747 show a composition bias toward basic residues; sequence KGKKATQGKNKKGV.

This sequence belongs to the STT3 family. In terms of assembly, component of the oligosaccharyltransferase (OST) complex. Mg(2+) serves as cofactor. Mn(2+) is required as a cofactor.

Its subcellular location is the endoplasmic reticulum membrane. It carries out the reaction a di-trans,poly-cis-dolichyl diphosphooligosaccharide + L-asparaginyl-[protein] = N(4)-(oligosaccharide-(1-&gt;4)-N-acetyl-beta-D-glucosaminyl-(1-&gt;4)-N-acetyl-beta-D-glucosaminyl)-L-asparaginyl-[protein] + a di-trans,poly-cis-dolichyl diphosphate + H(+). Its pathway is protein modification; protein glycosylation. Catalytic subunit of the oligosaccharyl transferase (OST) complex that catalyzes the initial transfer of a defined glycan (Glc(3)Man(9)GlcNAc(2) in eukaryotes) from the lipid carrier dolichol-pyrophosphate to an asparagine residue within an Asn-X-Ser/Thr consensus motif in nascent polypeptide chains, the first step in protein N-glycosylation. N-glycosylation occurs cotranslationally and the complex associates with the Sec61 complex at the channel-forming translocon complex that mediates protein translocation across the endoplasmic reticulum (ER). All subunits are required for a maximal enzyme activity. This subunit contains the active site and the acceptor peptide and donor lipid-linked oligosaccharide (LLO) binding pockets. The polypeptide is Dolichyl-diphosphooligosaccharide--protein glycosyltransferase subunit stt-3 (Caenorhabditis elegans).